Here is a 726-residue protein sequence, read N- to C-terminus: MAGAIRVTMEVGADGVAVVTICNPPVNALHPIIIQGLKEKYAEAMDRDDVKAIVLTGAGGKFCGGFDINVFTEVHKTGNVSLMPDVSVELVSNLMEAGKKPSVAAIQGLALGGGLELTMGCHARISTPEAQLGLPELTLGIIPGFGGTQRLPRLVGLPKAIEMMLQSKFITAKEGKEGGLVDALCSPDELIKMSRLWALEIANYRKPWIRSLARTDRLGSLSEARSVLNSARQQAKKVAANLPQHQACLDVMEEGVLCGGHAGVLKEAKVFKELVLSPTSKALVHAFFAQRLTTKVPGVTDVQLKPRKIRKVAVIGGGLMGSGIATALLVSNTSVVLKEVNPQFLQRGQKMIAANLEGLVKRGSLTKDKMNKAMSLLKGALDYSDFKDVDMVIEAVIEKIPLKQSIFSDLEKVCPPHCILATNTSTIDLNVVGEKTNSQDRIIGAHFFSPAHIMPLLEIVRTEKTSPQAILDLITVGKMIKKVPVVVGNCTGFAVNRTFFPYTQGSHLLVSIGIDVFRIDRVISSFGMPMGPFQLQDLAGYGVALAVKDIYAAAFGTRNLDSNLVDLMVQNGRQGKSNGKGYYLYEKGGKPKPDPSVQVVIDEYRRCAKTMPGGKPVTLSDQDILEMIFFPVVNEACRVMDENVVIRASDLDIASILGMGFPKFRGGLVFWADTIGAPYIHSKLSKWTEIYGDFFKPSSYLEDRAKRSLPLSAPNATQQASSRSRM.

It in the N-terminal section; belongs to the enoyl-CoA hydratase/isomerase family. This sequence in the central section; belongs to the 3-hydroxyacyl-CoA dehydrogenase family. As to quaternary structure, monomer.

It localises to the peroxisome. It is found in the cytoplasm. The protein localises to the cytoskeleton. It carries out the reaction a (3S)-3-hydroxyacyl-CoA = a (2E)-enoyl-CoA + H2O. It catalyses the reaction a 4-saturated-(3S)-3-hydroxyacyl-CoA = a (3E)-enoyl-CoA + H2O. The catalysed reaction is a (3Z)-enoyl-CoA = a 4-saturated (2E)-enoyl-CoA. The enzyme catalyses a (3E)-enoyl-CoA = a 4-saturated (2E)-enoyl-CoA. It carries out the reaction (3S)-3-hydroxybutanoyl-CoA = (3R)-3-hydroxybutanoyl-CoA. It catalyses the reaction a (3S)-3-hydroxyacyl-CoA + NAD(+) = a 3-oxoacyl-CoA + NADH + H(+). It functions in the pathway lipid metabolism; fatty acid beta-oxidation. Functionally, multifunctional enzyme involved in fatty acid beta-oxidation. Also binds to RNA and microtubules. Possible role in subcellular mRNA localization and RNA-cytoskeleton interactions. This Oryza sativa subsp. japonica (Rice) protein is Peroxisomal fatty acid beta-oxidation multifunctional protein (MFP).